The following is a 213-amino-acid chain: ATP phosphoribosyltransferase (213 aa).

This sequence belongs to the ATP phosphoribosyltransferase family. Short subfamily. In terms of assembly, heteromultimer composed of HisG and HisZ subunits.

It localises to the cytoplasm. The enzyme catalyses 1-(5-phospho-beta-D-ribosyl)-ATP + diphosphate = 5-phospho-alpha-D-ribose 1-diphosphate + ATP. Its pathway is amino-acid biosynthesis; L-histidine biosynthesis; L-histidine from 5-phospho-alpha-D-ribose 1-diphosphate: step 1/9. Its function is as follows. Catalyzes the condensation of ATP and 5-phosphoribose 1-diphosphate to form N'-(5'-phosphoribosyl)-ATP (PR-ATP). Has a crucial role in the pathway because the rate of histidine biosynthesis seems to be controlled primarily by regulation of HisG enzymatic activity. The sequence is that of ATP phosphoribosyltransferase (hisG) from Listeria innocua serovar 6a (strain ATCC BAA-680 / CLIP 11262).